The chain runs to 188 residues: Elongation factor P (188 aa).

It belongs to the elongation factor P family.

The protein resides in the cytoplasm. Its pathway is protein biosynthesis; polypeptide chain elongation. In terms of biological role, involved in peptide bond synthesis. Stimulates efficient translation and peptide-bond synthesis on native or reconstituted 70S ribosomes in vitro. Probably functions indirectly by altering the affinity of the ribosome for aminoacyl-tRNA, thus increasing their reactivity as acceptors for peptidyl transferase. This chain is Elongation factor P, found in Bacteroides thetaiotaomicron (strain ATCC 29148 / DSM 2079 / JCM 5827 / CCUG 10774 / NCTC 10582 / VPI-5482 / E50).